A 321-amino-acid polypeptide reads, in one-letter code: Probable membrane-associated kinase regulator 3 (321 aa).

Residues 297–314 (KSNVTESELCSSRTSVST) are compositionally biased toward polar residues. The interval 297 to 321 (KSNVTESELCSSRTSVSTCGDLDKD) is disordered.

The protein localises to the cell membrane. The sequence is that of Probable membrane-associated kinase regulator 3 (MAKR3) from Arabidopsis thaliana (Mouse-ear cress).